The primary structure comprises 422 residues: Gamma-glutamyl phosphate reductase (422 aa).

Belongs to the gamma-glutamyl phosphate reductase family.

The protein localises to the cytoplasm. The enzyme catalyses L-glutamate 5-semialdehyde + phosphate + NADP(+) = L-glutamyl 5-phosphate + NADPH + H(+). The protein operates within amino-acid biosynthesis; L-proline biosynthesis; L-glutamate 5-semialdehyde from L-glutamate: step 2/2. Functionally, catalyzes the NADPH-dependent reduction of L-glutamate 5-phosphate into L-glutamate 5-semialdehyde and phosphate. The product spontaneously undergoes cyclization to form 1-pyrroline-5-carboxylate. The chain is Gamma-glutamyl phosphate reductase from Nitrosomonas eutropha (strain DSM 101675 / C91 / Nm57).